The primary structure comprises 279 residues: Undecaprenyl-diphosphatase (279 aa).

The next 8 membrane-spanning stretches (helical) occupy residues leucine 2–leucine 22, alanine 44–isoleucine 64, tryptophan 85–leucine 105, phenylalanine 113–isoleucine 133, valine 163–leucine 183, threonine 188–leucine 208, leucine 225–leucine 245, and phenylalanine 255–phenylalanine 275.

Belongs to the UppP family.

It is found in the cell membrane. The enzyme catalyses di-trans,octa-cis-undecaprenyl diphosphate + H2O = di-trans,octa-cis-undecaprenyl phosphate + phosphate + H(+). Functionally, catalyzes the dephosphorylation of undecaprenyl diphosphate (UPP). Confers resistance to bacitracin. The protein is Undecaprenyl-diphosphatase of Streptococcus equi subsp. equi (strain 4047).